Consider the following 161-residue polypeptide: Protein-export protein SecB (161 aa).

This sequence belongs to the SecB family. As to quaternary structure, homotetramer, a dimer of dimers. One homotetramer interacts with 1 SecA dimer.

It is found in the cytoplasm. One of the proteins required for the normal export of preproteins out of the cell cytoplasm. It is a molecular chaperone that binds to a subset of precursor proteins, maintaining them in a translocation-competent state. It also specifically binds to its receptor SecA. This Ectopseudomonas mendocina (strain ymp) (Pseudomonas mendocina) protein is Protein-export protein SecB.